Here is a 469-residue protein sequence, read N- to C-terminus: 3-isopropylmalate dehydratase large subunit (469 aa).

Residues C350, C410, and C413 each coordinate [4Fe-4S] cluster.

The protein belongs to the aconitase/IPM isomerase family. LeuC type 1 subfamily. In terms of assembly, heterodimer of LeuC and LeuD. [4Fe-4S] cluster is required as a cofactor.

The catalysed reaction is (2R,3S)-3-isopropylmalate = (2S)-2-isopropylmalate. Its pathway is amino-acid biosynthesis; L-leucine biosynthesis; L-leucine from 3-methyl-2-oxobutanoate: step 2/4. Functionally, catalyzes the isomerization between 2-isopropylmalate and 3-isopropylmalate, via the formation of 2-isopropylmaleate. The protein is 3-isopropylmalate dehydratase large subunit of Rhizobium johnstonii (strain DSM 114642 / LMG 32736 / 3841) (Rhizobium leguminosarum bv. viciae).